Consider the following 122-residue polypeptide: Large ribosomal subunit protein uL14 (122 aa).

It belongs to the universal ribosomal protein uL14 family. In terms of assembly, part of the 50S ribosomal subunit. Forms a cluster with proteins L3 and L19. In the 70S ribosome, L14 and L19 interact and together make contacts with the 16S rRNA in bridges B5 and B8.

Functionally, binds to 23S rRNA. Forms part of two intersubunit bridges in the 70S ribosome. The chain is Large ribosomal subunit protein uL14 from Pseudomonas fluorescens (strain ATCC BAA-477 / NRRL B-23932 / Pf-5).